Reading from the N-terminus, the 99-residue chain is Ubiquitin-related modifier 1 homolog 2 (99 aa).

At Gly99 the chain carries 1-thioglycine. A Glycyl lysine isopeptide (Gly-Lys) (interchain with K-? in acceptor proteins) cross-link involves residue Gly99.

It belongs to the URM1 family. Post-translationally, C-terminal thiocarboxylation occurs in 2 steps, it is first acyl-adenylated (-COAMP) via the hesA/moeB/thiF part of the MOCS3 homolog, then thiocarboxylated (-COSH) via the rhodanese domain of the MOCS3 homolog.

The protein localises to the cytoplasm. It participates in tRNA modification; 5-methoxycarbonylmethyl-2-thiouridine-tRNA biosynthesis. Functionally, acts as a sulfur carrier required for 2-thiolation of mcm(5)S(2)U at tRNA wobble positions of cytosolic tRNA(Lys), tRNA(Glu) and tRNA(Gln). Serves as sulfur donor in tRNA 2-thiolation reaction by being thiocarboxylated (-COSH) at its C-terminus by MOCS3. The sulfur is then transferred to tRNA to form 2-thiolation of mcm(5)S(2)U. Also acts as a ubiquitin-like protein (UBL) that is covalently conjugated via an isopeptide bond to lysine residues of target proteins. The thiocarboxylated form serves as substrate for conjugation and oxidative stress specifically induces the formation of UBL-protein conjugates. The sequence is that of Ubiquitin-related modifier 1 homolog 2 from Arabidopsis thaliana (Mouse-ear cress).